The following is a 177-amino-acid chain: ATP synthase subunit delta (177 aa).

Belongs to the ATPase delta chain family. F-type ATPases have 2 components, F(1) - the catalytic core - and F(0) - the membrane proton channel. F(1) has five subunits: alpha(3), beta(3), gamma(1), delta(1), epsilon(1). F(0) has three main subunits: a(1), b(2) and c(10-14). The alpha and beta chains form an alternating ring which encloses part of the gamma chain. F(1) is attached to F(0) by a central stalk formed by the gamma and epsilon chains, while a peripheral stalk is formed by the delta and b chains.

It localises to the cell inner membrane. Its function is as follows. F(1)F(0) ATP synthase produces ATP from ADP in the presence of a proton or sodium gradient. F-type ATPases consist of two structural domains, F(1) containing the extramembraneous catalytic core and F(0) containing the membrane proton channel, linked together by a central stalk and a peripheral stalk. During catalysis, ATP synthesis in the catalytic domain of F(1) is coupled via a rotary mechanism of the central stalk subunits to proton translocation. Functionally, this protein is part of the stalk that links CF(0) to CF(1). It either transmits conformational changes from CF(0) to CF(1) or is implicated in proton conduction. The protein is ATP synthase subunit delta of Neisseria gonorrhoeae (strain ATCC 700825 / FA 1090).